A 304-amino-acid polypeptide reads, in one-letter code: Porphobilinogen deaminase (304 aa).

Cys-240 carries the post-translational modification S-(dipyrrolylmethanemethyl)cysteine.

This sequence belongs to the HMBS family. Monomer. It depends on dipyrromethane as a cofactor.

The catalysed reaction is 4 porphobilinogen + H2O = hydroxymethylbilane + 4 NH4(+). It functions in the pathway porphyrin-containing compound metabolism; protoporphyrin-IX biosynthesis; coproporphyrinogen-III from 5-aminolevulinate: step 2/4. Its function is as follows. Tetrapolymerization of the monopyrrole PBG into the hydroxymethylbilane pre-uroporphyrinogen in several discrete steps. This is Porphobilinogen deaminase from Xanthomonas campestris pv. campestris (strain B100).